The primary structure comprises 423 residues: Serine--tRNA ligase 1 (423 aa).

231-233 (TAE) is an L-serine binding site. 262–264 (RSE) serves as a coordination point for ATP. Glutamate 285 contacts L-serine. Residue 349–352 (EISS) participates in ATP binding. Serine 384 contacts L-serine.

It belongs to the class-II aminoacyl-tRNA synthetase family. Type-1 seryl-tRNA synthetase subfamily. As to quaternary structure, homodimer. The tRNA molecule binds across the dimer.

The protein localises to the cytoplasm. It carries out the reaction tRNA(Ser) + L-serine + ATP = L-seryl-tRNA(Ser) + AMP + diphosphate + H(+). It catalyses the reaction tRNA(Sec) + L-serine + ATP = L-seryl-tRNA(Sec) + AMP + diphosphate + H(+). It participates in aminoacyl-tRNA biosynthesis; selenocysteinyl-tRNA(Sec) biosynthesis; L-seryl-tRNA(Sec) from L-serine and tRNA(Sec): step 1/1. Catalyzes the attachment of serine to tRNA(Ser). Is also able to aminoacylate tRNA(Sec) with serine, to form the misacylated tRNA L-seryl-tRNA(Sec), which will be further converted into selenocysteinyl-tRNA(Sec). In Enterococcus faecalis (strain ATCC 700802 / V583), this protein is Serine--tRNA ligase 1.